The following is a 1219-amino-acid chain: MANLQVSGILEKFQMTGKDKDYRYMATSDLLNELNKDSFKIDLDLEVRLSSIILQQLDDVAGDVSGLAVKCLAPLVKKVGEERIVEMTNKLCDKLLHGKDQHRDTASIALRTVVAQIAPTLAPSILVTLTPQMIGGISGQGMSSGIKCECLEIMCDVVQKYGSLMTDDHEKLLNTLLLQLGCNQATVRKKTVTCIASLASSLSDDLLAKATVEVVKNLSNRNAKSEITRTNIQMIGALCRAVGYRFGTHLGNTVPVLINYCTSASENDEELREYSLQALESFLLRCPRDISPYCDEILNLTLEYISYDPNFTDNMEEDTDNETLEDEEDDESANEYTDDEDASWKVRRAAAKCLAGLIVSRSEMLTKVYQEACPKLIDRFKEREENVKMDVFNTFIDLLRQTGNVTKGQTDTDESSPKWLLKQEVSKIVKSINRQLREKSVKTKVGAFSVLRELVVVLPDCLADHIGSLVPGIERALNDKSSTSNLKIEALVFTKLVLASHAPPVFHPYIKALSSPVLAAVGERYYKVTAEALRVCGELVRVVRPSTAGMGFDFKPFVHPIYNAIMSRLTNQDQDQEVKECAITCMGLVISTFGDQLRAELPSCLPVLVDRMGNEITRLTAVKAFSVIATSPLHINLSCVLDHLIAELTGFLRKANRVLRQATLITMNTLVTAYGDKIGSEAYEVILVELSSLISVSDLHMTALALELCCTLMTGKSCSENISLAVRNKVLPQALTLVKSPLLQGQALLDLQKFFEALVYHANTSFYTLLESLLSCAKPSPQSGGVPKQALYSIAQCVAVLCLAAGDKNCSSTVKMLMEILKDDSGTNSAKQHLALLSLGEIGRRKDLSAHAGIETIVIESFQSPFEEIKSAASYALGNIAVGNLSNYLPFILDQIDNQQKKQYILLHSLKEVIVRQSVDKADFQNSSVEKILALLFNHCESEEEGVRNVVAECLGKMALIEPEKLVPALQVRTTSPAAFTRATVVTAVKYSVVERPEKLDEIIFPQISSFLMLIKDGDRHVRRAAVSALSTFAHYKPNLIKGLLPELLPLLYDQTVIKKELIRTVDLGPFKHVVDDGLELRKAAFECVFTLVDSCLDQVNPSSFIVPFLKSGLEDHYDLKMLCHLILSLLADKCPSAVLAVLDSLVEPLHKTISFKPKQDAVKQEHDRNEDMIRSALRAISSLDRINGVDYSHKFKGLMGDMKRSVPLWEKFQTIRNE.

At alanine 2 the chain carries N-acetylalanine. HEAT repeat units follow at residues 44–81 (DLEV…KVGE), 83–119 (RIVE…QIAP), 209–244 (KATV…AVGY), 248–288 (THLG…RCPR), 327–363 (EEDD…SRSE), 367–404 (KVYQ…QTGN), 423–460 (QEVS…VLPD), 464–503 (DHIG…SHAP), 599–636 (AELP…LHIN), 639–676 (CVLD…AYGD), 808–848 (KNCS…RKDL), 850–883 (AHAG…IAVG), 927–964 (SSVE…IEPE), 966–998 (LVPA…ERPE), 1002–1039 (EIIF…YKPN), 1043–1079 (GLLP…DDGL), 1101–1137 (NPSS…KCPS), and 1141–1180 (AVLD…ALRA). The disordered stretch occupies residues 311-340 (FTDNMEEDTDNETLEDEEDDESANEYTDDE). Positions 314-340 (NMEEDTDNETLEDEEDDESANEYTDDE) are enriched in acidic residues.

Belongs to the CAND family. As to quaternary structure, interacts with CUL1 and CUL4. Binds unneddylated CUL1, but cannot bind CUL1 once it has been neddylated. In terms of tissue distribution, highly expressed in roots. Expressed in stems, flowers and siliques.

Its function is as follows. Key assembly factor of SCF (SKP1-CUL1-F-box protein) E3 ubiquitin ligase complexes that promotes the exchange of the substrate-recognition F-box subunit in SCF complexes, thereby playing a key role in the cellular repertoire of SCF complexes. Acts as a F-box protein exchange factor. Required for SCF(TIR1) function. Modulates SCF(TIR1) function through its interactions with the CUL1 subunit. Represses photomorphogenesis by promoting HY5 degradation in darkness. This chain is Cullin-associated NEDD8-dissociated protein 1 (CAND1), found in Arabidopsis thaliana (Mouse-ear cress).